A 311-amino-acid chain; its full sequence is tRNA-cytidine(32) 2-sulfurtransferase (311 aa).

The PP-loop motif motif lies at 47–52; sequence SGGKDS. 3 residues coordinate [4Fe-4S] cluster: Cys-122, Cys-125, and Cys-213.

This sequence belongs to the TtcA family. As to quaternary structure, homodimer. Mg(2+) is required as a cofactor. Requires [4Fe-4S] cluster as cofactor.

Its subcellular location is the cytoplasm. It catalyses the reaction cytidine(32) in tRNA + S-sulfanyl-L-cysteinyl-[cysteine desulfurase] + AH2 + ATP = 2-thiocytidine(32) in tRNA + L-cysteinyl-[cysteine desulfurase] + A + AMP + diphosphate + H(+). The protein operates within tRNA modification. Functionally, catalyzes the ATP-dependent 2-thiolation of cytidine in position 32 of tRNA, to form 2-thiocytidine (s(2)C32). The sulfur atoms are provided by the cysteine/cysteine desulfurase (IscS) system. The protein is tRNA-cytidine(32) 2-sulfurtransferase of Pectobacterium atrosepticum (strain SCRI 1043 / ATCC BAA-672) (Erwinia carotovora subsp. atroseptica).